We begin with the raw amino-acid sequence, 490 residues long: MSLWSSVKFAQRYAQLPKVFYRLVTPQPLDNNRWVIWNGELAQGFALPKHADDPQLLSVFSGAEPFSAFKPLAMKYAGHQFGVYNPDLGDGRGLLLGEMQNQQGQWFDIHLKGAGLTPFSRMGDGRAVLRSTLREYLCSEAMAALGIETTRALGMMVSDTPVYREQVEQGACLIRLAQTHIRFGHFEHFFYTEQYDELRLLADNVIEWYMPECTAHDKPYLAMFEQVVARTATMIAQWQAVGFAHGVMNTDNMSILGQTFDYGPFGFLDDYEPGYICNHSDYQGRYAFDQQPRVALWNLSALAHALSPLIERDDLELALAQYEPTLGKVFSQLMRQKLGLLSQQEGDSELFNAMFALLAENHTDYTRFFRTLSQLDREDEQTVIDLFIDRDAAHGWLSRYLERVAMEQTASGEAKSAQQRCEQMRAVNPKYILRNYLAQQAIDKAQQGDFSEVHTLAKLLKNPYDEQAEMEAYAHLPPEWGKKMVISCSS.

ATP-binding residues include Gly-89, Gly-91, Arg-92, Lys-112, Asp-124, Gly-125, Arg-175, and Arg-182. Asp-251 (proton acceptor) is an active-site residue. Positions 252 and 261 each coordinate Mg(2+). Position 261 (Asp-261) interacts with ATP.

The protein belongs to the SELO family. Requires Mg(2+) as cofactor. Mn(2+) is required as a cofactor.

The catalysed reaction is L-seryl-[protein] + ATP = 3-O-(5'-adenylyl)-L-seryl-[protein] + diphosphate. It catalyses the reaction L-threonyl-[protein] + ATP = 3-O-(5'-adenylyl)-L-threonyl-[protein] + diphosphate. The enzyme catalyses L-tyrosyl-[protein] + ATP = O-(5'-adenylyl)-L-tyrosyl-[protein] + diphosphate. It carries out the reaction L-histidyl-[protein] + UTP = N(tele)-(5'-uridylyl)-L-histidyl-[protein] + diphosphate. The catalysed reaction is L-seryl-[protein] + UTP = O-(5'-uridylyl)-L-seryl-[protein] + diphosphate. It catalyses the reaction L-tyrosyl-[protein] + UTP = O-(5'-uridylyl)-L-tyrosyl-[protein] + diphosphate. Functionally, nucleotidyltransferase involved in the post-translational modification of proteins. It can catalyze the addition of adenosine monophosphate (AMP) or uridine monophosphate (UMP) to a protein, resulting in modifications known as AMPylation and UMPylation. In Vibrio vulnificus (strain CMCP6), this protein is Protein nucleotidyltransferase YdiU.